The chain runs to 197 residues: 3-isopropylmalate dehydratase small subunit (197 aa).

This sequence belongs to the LeuD family. LeuD type 1 subfamily. In terms of assembly, heterodimer of LeuC and LeuD.

The catalysed reaction is (2R,3S)-3-isopropylmalate = (2S)-2-isopropylmalate. It participates in amino-acid biosynthesis; L-leucine biosynthesis; L-leucine from 3-methyl-2-oxobutanoate: step 2/4. Catalyzes the isomerization between 2-isopropylmalate and 3-isopropylmalate, via the formation of 2-isopropylmaleate. The protein is 3-isopropylmalate dehydratase small subunit of Mycobacterium sp. (strain JLS).